Here is a 335-residue protein sequence, read N- to C-terminus: Biotin synthase (335 aa).

Residues 51–281 (YRVQLASLLS…RSRVRLSAGR (231 aa)) enclose the Radical SAM core domain. [4Fe-4S] cluster-binding residues include Cys-66, Cys-70, and Cys-73. Cys-112, Cys-144, Cys-204, and Arg-276 together coordinate [2Fe-2S] cluster.

It belongs to the radical SAM superfamily. Biotin synthase family. In terms of assembly, homodimer. It depends on [4Fe-4S] cluster as a cofactor. [2Fe-2S] cluster serves as cofactor.

The enzyme catalyses (4R,5S)-dethiobiotin + (sulfur carrier)-SH + 2 reduced [2Fe-2S]-[ferredoxin] + 2 S-adenosyl-L-methionine = (sulfur carrier)-H + biotin + 2 5'-deoxyadenosine + 2 L-methionine + 2 oxidized [2Fe-2S]-[ferredoxin]. It functions in the pathway cofactor biosynthesis; biotin biosynthesis; biotin from 7,8-diaminononanoate: step 2/2. Its function is as follows. Catalyzes the conversion of dethiobiotin (DTB) to biotin by the insertion of a sulfur atom into dethiobiotin via a radical-based mechanism. The protein is Biotin synthase of Prochlorococcus marinus (strain MIT 9303).